The following is a 399-amino-acid chain: Vitamin K-dependent protein Z (399 aa).

The N-terminal stretch at 1 to 22 (MAGCILLLRGFILTLILHQVEL) is a signal peptide. The propeptide occupies 23 to 40 (SVFLPAPKANNVLRRWRR). The Gla domain maps to 41–86 (GSSYFLEEIFQGNLEKECYEEVCNYEEAREVFENDVITDEFWRQYG). A 4-carboxyglutamate mark is found at Glu47, Glu48, Glu55, Glu57, Glu60, Glu61, Glu66, Glu67, Glu70, Glu73, and Glu80. Cys58 and Cys63 are joined by a disulfide. EGF-like domains follow at residues 87-123 (GGSPCVSQPCLNNGTCEDHIRSYSCTCSPGYEGKTCA) and 125-166 (AKNE…KSCG). 7 cysteine pairs are disulfide-bonded: Cys91-Cys102, Cys96-Cys111, Cys113-Cys122, Cys129-Cys141, Cys137-Cys150, Cys152-Cys165, and Cys208-Cys224. Asn99 is a glycosylation site (N-linked (GlcNAc...) asparagine). At Asp104 the chain carries (3R)-3-hydroxyaspartate. In terms of domain architecture, Peptidase S1 spans 172-399 (ACGALTSEHI…YSMWFKQIMK (228 aa)). Residues Asn230, Asn305, and Asn331 are each glycosylated (N-linked (GlcNAc...) asparagine). A disulfide bridge links Cys326 with Cys340.

It belongs to the peptidase S1 family. The iron and 2-oxoglutarate dependent 3-hydroxylation of aspartate and asparagine is (R) stereospecific within EGF domains. In terms of tissue distribution, plasma.

Its subcellular location is the secreted. Functionally, appears to assist hemostasis by binding thrombin and promoting its association with phospholipid vesicles. Inhibits activity of the coagulation protease factor Xa in the presence of SERPINA10, calcium and phospholipids. This is Vitamin K-dependent protein Z (Proz) from Mus musculus (Mouse).